The primary structure comprises 229 residues: Cytochrome c oxidase assembly factor 7 (229 aa).

Sel1-like repeat units lie at residues 34–66, 68–104, 108–145, 146–182, and 183–218; these read PEGC…EVNA, AQSC…NTQG, VDAC…EGGF, APSC…DLGH, and VWGC…DLHG. The interval 197 to 229 is disordered; sequence DGTDKDEQRAEELKNRAKDLHGQEKERQLKFGE.

The protein belongs to the hcp beta-lactamase family.

It is found in the mitochondrion intermembrane space. Functionally, may be required for assembly of mitochondrial respiratory chain complexes. The protein is Cytochrome c oxidase assembly factor 7 (coa7) of Danio rerio (Zebrafish).